Consider the following 348-residue polypeptide: Phenylalanine--tRNA ligase alpha subunit (348 aa).

Residue Glu269 coordinates Mg(2+).

It belongs to the class-II aminoacyl-tRNA synthetase family. Phe-tRNA synthetase alpha subunit type 1 subfamily. Tetramer of two alpha and two beta subunits. The cofactor is Mg(2+).

Its subcellular location is the cytoplasm. The catalysed reaction is tRNA(Phe) + L-phenylalanine + ATP = L-phenylalanyl-tRNA(Phe) + AMP + diphosphate + H(+). The polypeptide is Phenylalanine--tRNA ligase alpha subunit (Dechloromonas aromatica (strain RCB)).